Reading from the N-terminus, the 65-residue chain is MKYNIVFLFAIIASLACLQLTFAAPAASPLANPGASPDAAPNADPLADPFLPIIGKLLSGLLGKK.

The N-terminal stretch at 1–23 (MKYNIVFLFAIIASLACLQLTFA) is a signal peptide. AXPX repeat units lie at residues 23-26 (AAPA), 27-30 (ASPL), 31-34 (ANPG), 35-38 (ASPD), 39-42 (AAPN), 43-46 (ADPL), and 47-50 (ADPF). The propeptide occupies 24–49 (APAASPLANPGASPDAAPNADPLADP). At Leu62 the chain carries Leucine amide.

Belongs to the MCD family. Crabrolin subfamily. Expressed by the venom gland.

The protein resides in the secreted. Shows antimicrobial activity against the Gram-negative bacteria E.coli ATCC 25922 (MIC=30 ug/ml), the Gram-positive bacteria S.aureus ATCC 2592 (MIC=5 ug/ml) and the fungus C.albicans ATCC 2002 (MIC=25 ug/ml). Acts as a mast cell degranulating peptide. Its mast cell degranulation activity may be related to the activation of G-protein coupled receptors in mast cells as well as interaction with other proteins located in cell endosomal membranes in the mast cells. Induces the chemotaxis of neutrophils. The protein is Vespid chemotactic peptide 5h of Vespa magnifica (Hornet).